Reading from the N-terminus, the 216-residue chain is UDP-N-acetylbacillosamine N-acetyltransferase (216 aa).

The Proton acceptor role is filled by H137. H146 contributes to the acetyl-CoA binding site.

Belongs to the transferase hexapeptide repeat family. In terms of assembly, forms oligomers.

The enzyme catalyses UDP-N-acetylbacillosamine + acetyl-CoA = UDP-N,N'-diacetylbacillosamine + CoA + H(+). Catalyzes the conversion of UDP-2,4,6-trideoxy-2-acetamido-4-amino glucose to UDP-2,4,6-trideoxy-2,4-diacetamido glucose, commonly known as UDP-N,N'-diacetylbacillosamine (UDP-diNAcBac). The sequence is that of UDP-N-acetylbacillosamine N-acetyltransferase from Bacillus subtilis (strain 168).